We begin with the raw amino-acid sequence, 801 residues long: Phosphatidylinositol 3-kinase pik3 (801 aa).

Residues V14–Q166 form the C2 PI3K-type domain. The PIK helical domain occupies D257–E439. In terms of domain architecture, PI3K/PI4K catalytic spans I515 to F785. The tract at residues V521–Q527 is G-loop. The segment at G654–N662 is catalytic loop. The segment at H673 to S694 is activation loop.

It belongs to the PI3/PI4-kinase family. As to quaternary structure, component of the autophagy-specific vps34 PI3-kinase complex I composed of vps15, atg6, pik3/vps34, atg14 and atg38. Also a component of the VPS34 PI3-kinase complex II composed of atg6, pik3, vps15 and vps38.

The enzyme catalyses a 1,2-diacyl-sn-glycero-3-phospho-(1D-myo-inositol) + ATP = a 1,2-diacyl-sn-glycero-3-phospho-(1D-myo-inositol-3-phosphate) + ADP + H(+). Functionally, phosphatidylinositol 3-kinase that functions as a part of the autophagy-specific VPS34 PI3-kinase complex I that plays a role in autophagosome assembly. This complex is essential to recruit the atg8-phosphatidylinositol conjugate and the atg12-atg5 conjugate to the pre-autophagosomal structure. Also functions as part of the VPS34 PI3-kinase complex II. The sequence is that of Phosphatidylinositol 3-kinase pik3 (pik3) from Schizosaccharomyces pombe (strain 972 / ATCC 24843) (Fission yeast).